The chain runs to 865 residues: Envelope glycoprotein gp160 (865 aa).

The N-terminal stretch at 1-20 is a signal peptide; the sequence is MRYTIITLGIIVIGIGIVLS. The Extracellular segment spans residues 21–705; that stretch reads KQWITVFYGI…SKWLNILKMG (685 aa). A glycan (N-linked (GlcNAc...) asparagine; by host) is linked at N35. C42 and C55 are joined by a disulfide. Residues N68, N117, N150, N165, N195, N198, N210, N252, N255, N266, N276, N282, N294, N306, N316, N373, N414, N451, N488, and N491 are each glycosylated (N-linked (GlcNAc...) asparagine; by host). Disulfide bonds link C101/C218, C108/C209, C113/C166, C231/C261, and C241/C253. Positions 113–165 are V1; that stretch reads CVELNSTRERATTPTTTPKSTGLPCVGPTSGENLQSCNASIIEREMEDEPASN. Residues 166–209 form a V2 region; the sequence is CTFAMAGYVRDQKKNYYSVVWNDAEIYCKNKTNSTSKECYMIHC. The segment at 311–343 is V3; sequence CRRPGNKTVLPVTIMAGLVFHSQKYNMKLRQAW. C311 and C344 are oxidised to a cystine. C396 and C471 are oxidised to a cystine. The tract at residues 403-444 is V4; the sequence is CKMDWFLNYLNNKTWDAYHNFCSSKKKGHAPGPCVQRTYVAY. The segment at 487–494 is V5; it reads KNRTNVTL. Residues 537-557 are fusion peptide; the sequence is VPFVLGFLGFLGAAGTAMGAA. The segment at 600-616 is immunosuppression; sequence LNARVTALEKYLEDQAR. N-linked (GlcNAc...) asparagine; by host glycans are attached at residues N645 and N661. Residues 650–675 are a coiled coil; it reads EWERQIADLESNITGQLVKAREQEEK. The MPER; binding to GalCer stretch occupies residues 682-703; that stretch reads KLTSWSDFWSWFDFSKWLNILK. A helical membrane pass occupies residues 706–726; sequence FLVIVGIIGLRLLYTVYGCIV. Over 727-865 the chain is Cytoplasmic; sequence RVRQGYVPLS…VRQGLEEILN (139 aa). Positions 732 to 735 match the YXXL motif; contains endocytosis signal motif; that stretch reads YVPL. Residues 744–763 are disordered; sequence VGKGRPDNADEPGEGGDNSR.

The mature envelope protein (Env) consists of a homotrimer of non-covalently associated gp120-gp41 heterodimers. The resulting complex protrudes from the virus surface as a spike. Interacts with host CD4 and CCR5. Gp120 also interacts with the C-type lectins CD209/DC-SIGN and CLEC4M/DC-SIGNR (collectively referred to as DC-SIGN(R)). As to quaternary structure, the mature envelope protein (Env) consists of a homotrimer of non-covalently associated gp120-gp41 heterodimers. The resulting complex protrudes from the virus surface as a spike. In terms of processing, specific enzymatic cleavages in vivo yield mature proteins. Envelope glycoproteins are synthesized as an inactive precursor that is heavily N-glycosylated and processed likely by host cell furin in the Golgi to yield the mature SU and TM proteins. The cleavage site between SU and TM requires the minimal sequence [KR]-X-[KR]-R.

It is found in the virion membrane. Its subcellular location is the host cell membrane. The protein resides in the host endosome membrane. The surface protein gp120 (SU) attaches the virus to the host lymphoid cell by binding to the primary receptor CD4. This interaction induces a structural rearrangement creating a high affinity binding site for a chemokine coreceptor like CCR5. This peculiar 2 stage receptor-interaction strategy allows gp120 to maintain the highly conserved coreceptor-binding site in a cryptic conformation, protected from neutralizing antibodies. These changes are transmitted to the transmembrane protein gp41 and are thought to activate its fusogenic potential by unmasking its fusion peptide. Its function is as follows. Surface protein gp120 (SU) may target the virus to gut-associated lymphoid tissue (GALT) by binding host ITGA4/ITGB7 (alpha-4/beta-7 integrins), a complex that mediates T-cell migration to the GALT. Interaction between gp120 and ITGA4/ITGB7 would allow the virus to enter GALT early in the infection, infecting and killing most of GALT's resting CD4+ T-cells. This T-cell depletion is believed to be the major insult to the host immune system leading to AIDS. In terms of biological role, the surface protein gp120 is a ligand for CD209/DC-SIGN and CLEC4M/DC-SIGNR, which are respectively found on dendritic cells (DCs), and on endothelial cells of liver sinusoids and lymph node sinuses. These interactions allow capture of viral particles at mucosal surfaces by these cells and subsequent transmission to permissive cells. DCs are professional antigen presenting cells, critical for host immunity by inducing specific immune responses against a broad variety of pathogens. They act as sentinels in various tissues where they take up antigen, process it, and present it to T-cells following migration to lymphoid organs. SIV subverts the migration properties of dendritic cells to gain access to CD4+ T-cells in lymph nodes. Virus transmission to permissive T-cells occurs either in trans (without DCs infection, through viral capture and transmission), or in cis (following DCs productive infection, through the usual CD4-gp120 interaction), thereby inducing a robust infection. In trans infection, bound virions remain infectious over days and it is proposed that they are not degraded, but protected in non-lysosomal acidic organelles within the DCs close to the cell membrane thus contributing to the viral infectious potential during DCs' migration from the periphery to the lymphoid tissues. On arrival at lymphoid tissues, intact virions recycle back to DCs' cell surface allowing virus transmission to CD4+ T-cells. Virion capture also seems to lead to MHC-II-restricted viral antigen presentation, and probably to the activation of SIV-specific CD4+ cells. Functionally, the transmembrane protein gp41 (TM) acts as a class I viral fusion protein. Under the current model, the protein has at least 3 conformational states: pre-fusion native state, pre-hairpin intermediate state, and post-fusion hairpin state. During fusion of viral and target intracellular membranes, the coiled coil regions (heptad repeats) assume a trimer-of-hairpins structure, positioning the fusion peptide in close proximity to the C-terminal region of the ectodomain. The formation of this structure appears to drive apposition and subsequent fusion of viral and target cell membranes. Complete fusion occurs in host cell endosomes. The virus undergoes clathrin-dependent internalization long before endosomal fusion, thus minimizing the surface exposure of conserved viral epitopes during fusion and reducing the efficacy of inhibitors targeting these epitopes. Membranes fusion leads to delivery of the nucleocapsid into the cytoplasm. The envelope glycoprotein gp160 precursor down-modulates cell surface CD4 antigen by interacting with it in the endoplasmic reticulum and blocking its transport to the cell surface. Its function is as follows. The gp120-gp41 heterodimer allows rapid transcytosis of the virus through CD4 negative cells such as simple epithelial monolayers of the intestinal, rectal and endocervical epithelial barriers. Both gp120 and gp41 specifically recognize glycosphingolipids galactosyl-ceramide (GalCer) or 3' sulfo-galactosyl-ceramide (GalS) present in the lipid rafts structures of epithelial cells. Binding to these alternative receptors allows the rapid transcytosis of the virus through the epithelial cells. This transcytotic vesicle-mediated transport of virions from the apical side to the basolateral side of the epithelial cells does not involve infection of the cells themselves. This Simian immunodeficiency virus agm.vervet (isolate AGM TYO-1) (SIV-agm.ver) protein is Envelope glycoprotein gp160 (env).